A 29-amino-acid chain; its full sequence is TALPQLRLPATSRILCAGVLEGGIDTCNR.

In terms of assembly, monomer. As to expression, expressed by the venom gland.

The protein resides in the secreted. Functionally, thrombin-like snake venom serine protease. In Crotalus durissus collilineatus (Brazilian rattlesnake), this protein is Thrombin-like enzyme collinein-2.